Reading from the N-terminus, the 40-residue chain is uncharacterized protein (40 aa).

An N-terminal signal peptide occupies residues 1–17; that stretch reads MAVAALAMYGGTCGACA.

This is an uncharacterized protein from Archaeoglobus fulgidus (strain ATCC 49558 / DSM 4304 / JCM 9628 / NBRC 100126 / VC-16).